Reading from the N-terminus, the 1247-residue chain is F-box/WD repeat-containing protein A (1247 aa).

One can recognise an START domain in the interval 1–214 (MQYVNGNDIS…PATVSGRLAK (214 aa)). Disordered regions lie at residues 484–514 (GNKD…DNII) and 552–576 (QQPQ…KEIK). Residues 552–566 (QQPQQQQQQPQEQQQ) are compositionally biased toward low complexity. Residues 631–677 (NSGFDNLPEEVVQIIFSNLSAINIVNLSLVCKRFKMATDSPILWKNL) enclose the F-box domain. Disordered regions lie at residues 697–744 (SNLS…QQQQ) and 833–856 (GQES…KRDN). 2 stretches are compositionally biased toward low complexity: residues 707–719 (NSNS…GSSS) and 726–744 (QQQN…QQQQ). Polar residues predominate over residues 833-846 (GQESPINKNSSDNP). 7 WD repeats span residues 895–934 (GHNR…GDYE), 945–984 (DHTQ…IEVI), 988–1025 (RPTN…LLWN), 1029–1073 (AHTK…CINT), 1076–1114 (GHSY…TFIS), 1119–1158 (KHTG…LSNI), and 1218–1247 (NHES…RWDF).

As to quaternary structure, component of an SCF complex including at least culA. Formation of this complex appears to require activity of the MAP kinase erk2. Interacts with regA.

Substrate recognition component of a SCF (SKP1-CUL1-F-box protein) E3 ubiquitin-protein ligase complex which mediates the ubiquitination and subsequent proteasomal degradation of target proteins. May target the cAMP phosphodiesterase regA for degradation leading to an increase in cAMP and PKA activity. Promotes development of prestalk cells as opposed to prespores within the developing fruiting body. Required for culmination and fruiting body development. In Dictyostelium discoideum (Social amoeba), this protein is F-box/WD repeat-containing protein A (fbxA).